The sequence spans 441 residues: ATP-dependent protease ATPase subunit HslU (441 aa).

Residues I18, 60-65 (GVGKTE), D254, E319, and R391 each bind ATP.

This sequence belongs to the ClpX chaperone family. HslU subfamily. In terms of assembly, a double ring-shaped homohexamer of HslV is capped on each side by a ring-shaped HslU homohexamer. The assembly of the HslU/HslV complex is dependent on binding of ATP.

It is found in the cytoplasm. In terms of biological role, ATPase subunit of a proteasome-like degradation complex; this subunit has chaperone activity. The binding of ATP and its subsequent hydrolysis by HslU are essential for unfolding of protein substrates subsequently hydrolyzed by HslV. HslU recognizes the N-terminal part of its protein substrates and unfolds these before they are guided to HslV for hydrolysis. The chain is ATP-dependent protease ATPase subunit HslU from Shewanella denitrificans (strain OS217 / ATCC BAA-1090 / DSM 15013).